We begin with the raw amino-acid sequence, 123 residues long: Large ribosomal subunit protein bL17 (123 aa).

This sequence belongs to the bacterial ribosomal protein bL17 family. Part of the 50S ribosomal subunit. Contacts protein L32.

The protein is Large ribosomal subunit protein bL17 of Borrelia hermsii (strain HS1 / DAH).